The sequence spans 265 residues: Glycine/sarcosine N-methyltransferase (265 aa).

Residues tyrosine 28, tryptophan 36, arginine 45, alanine 69, aspartate 90, 116–117, and leucine 134 contribute to the S-adenosyl-L-methionine site; that span reads DW. The substrate site is built by asparagine 136, arginine 169, and tyrosine 208.

This sequence belongs to the class I-like SAM-binding methyltransferase superfamily. Glycine N-methyltransferase family. In terms of assembly, monomer.

The catalysed reaction is glycine + 2 S-adenosyl-L-methionine = N,N-dimethylglycine + 2 S-adenosyl-L-homocysteine + 2 H(+). The enzyme catalyses glycine + S-adenosyl-L-methionine = sarcosine + S-adenosyl-L-homocysteine + H(+). It catalyses the reaction sarcosine + S-adenosyl-L-methionine = N,N-dimethylglycine + S-adenosyl-L-homocysteine + H(+). It participates in amine and polyamine biosynthesis; betaine biosynthesis via glycine pathway; betaine from glycine: step 1/3. It functions in the pathway amine and polyamine biosynthesis; betaine biosynthesis via glycine pathway; betaine from glycine: step 2/3. Its activity is regulated as follows. Inhibited by acetate, dimethylglycine and S-adenosyl-L-homocysteine. Catalyzes the methylation of glycine and sarcosine to sarcosine and dimethylglycine, respectively, with S-adenosylmethionine (AdoMet) acting as the methyl donor. The chain is Glycine/sarcosine N-methyltransferase from Aphanothece halophytica.